The following is a 199-amino-acid chain: Protein P1 (199 aa).

The protein is Protein P1 of Rice tungro bacilliform virus (isolate Philippines) (RTBV).